The chain runs to 107 residues: Large ribosomal subunit protein uL24 (107 aa).

This sequence belongs to the universal ribosomal protein uL24 family. Part of the 50S ribosomal subunit.

Functionally, one of two assembly initiator proteins, it binds directly to the 5'-end of the 23S rRNA, where it nucleates assembly of the 50S subunit. One of the proteins that surrounds the polypeptide exit tunnel on the outside of the subunit. This Gluconacetobacter diazotrophicus (strain ATCC 49037 / DSM 5601 / CCUG 37298 / CIP 103539 / LMG 7603 / PAl5) protein is Large ribosomal subunit protein uL24.